The sequence spans 367 residues: Zinc finger CCCH domain-containing protein 56 (367 aa).

A disordered region spans residues 38-80; the sequence is YNSQWNADGGGGGSSRAGSEQPPPGKKSRGGGGGEGGGNTSKS. Over residues 67 to 76 the composition is skewed to gly residues; it reads GGGGGEGGGN. C3H1-type zinc fingers lie at residues 87–114, 169–197, and 245–273; these read FFKT…HGME, AYKG…HDEQ, and NWKT…HGAA.

This chain is Zinc finger CCCH domain-containing protein 56, found in Oryza sativa subsp. japonica (Rice).